A 352-amino-acid polypeptide reads, in one-letter code: Thiamine-monophosphate kinase (352 aa).

Mg(2+)-binding residues include D58, T73, and D75. Residue H82 coordinates substrate. Mg(2+) is bound by residues D103 and D151. Residues 150 to 151 (GD) and R177 contribute to the ATP site. Mg(2+) is bound at residue D239. S241 contacts ATP. A Mg(2+)-binding site is contributed by D242. 2 residues coordinate substrate: D294 and W349.

Belongs to the thiamine-monophosphate kinase family.

It carries out the reaction thiamine phosphate + ATP = thiamine diphosphate + ADP. The protein operates within cofactor biosynthesis; thiamine diphosphate biosynthesis; thiamine diphosphate from thiamine phosphate: step 1/1. Catalyzes the ATP-dependent phosphorylation of thiamine-monophosphate (TMP) to form thiamine-pyrophosphate (TPP), the active form of vitamin B1. The polypeptide is Thiamine-monophosphate kinase (Caulobacter vibrioides (strain ATCC 19089 / CIP 103742 / CB 15) (Caulobacter crescentus)).